Reading from the N-terminus, the 101-residue chain is Small ribosomal subunit protein uS14A (101 aa).

The interval 29–73 (AIISSPSTPADARAAAQSELNRQPRDASPVRVRNRDAVDGRPRGH) is disordered. Residues 61 to 70 (RNRDAVDGRP) show a composition bias toward basic and acidic residues.

The protein belongs to the universal ribosomal protein uS14 family. As to quaternary structure, part of the 30S ribosomal subunit. Contacts proteins S3 and S10.

Functionally, binds 16S rRNA, required for the assembly of 30S particles and may also be responsible for determining the conformation of the 16S rRNA at the A site. The protein is Small ribosomal subunit protein uS14A of Mycolicibacterium gilvum (strain PYR-GCK) (Mycobacterium gilvum (strain PYR-GCK)).